Here is a 141-residue protein sequence, read N- to C-terminus: Large ribosomal subunit protein bL17 (141 aa).

Belongs to the bacterial ribosomal protein bL17 family. In terms of assembly, part of the 50S ribosomal subunit. Contacts protein L32.

In Allorhizobium ampelinum (strain ATCC BAA-846 / DSM 112012 / S4) (Agrobacterium vitis (strain S4)), this protein is Large ribosomal subunit protein bL17.